Here is a 174-residue protein sequence, read N- to C-terminus: UPF0398 protein YfdB (174 aa).

It belongs to the UPF0398 family.

The chain is UPF0398 protein YfdB (yfdB) from Lactococcus lactis subsp. lactis (strain IL1403) (Streptococcus lactis).